The primary structure comprises 393 residues: Sugar efflux transporter B (393 aa).

12 helical membrane-spanning segments follow: residues 13–33, 52–72, 84–101, 105–124, 152–172, 174–194, 219–239, 253–273, 283–303, 308–328, 344–364, and 366–386; these read FDLTSTAFLIVAFLTGIAGAL, MVGFFFTGSAVIGIIVSQFLA, LIVFCCVLGMLACVLFAW, YFILLFIGVFLSSFGSTANP, VSLAWVIGPPLAYALAMGFSF, VMYLSAAVAFIVCGVMVWFFL, LLLFVICTLMWGTNSLYIINM, LAGVMMGTAAGLEIPTMLIAG, LLMCIAVVAGLCFYVGMLLAH, LLGLQLLNAIYIGILGGIGML, LYTNTIRVGWIIAGSLAGIAA, and IWNYHAVFWFALVMIVATMFC.

It belongs to the major facilitator superfamily. Set transporter family.

It is found in the cell inner membrane. Involved in the efflux of sugars. The physiological role may be the detoxification of non-metabolizable sugar analogs. Can transport lactose and glucose. The polypeptide is Sugar efflux transporter B (setB) (Salmonella typhimurium (strain LT2 / SGSC1412 / ATCC 700720)).